A 443-amino-acid polypeptide reads, in one-letter code: Multidrug resistance protein MdtA (443 aa).

The signal sequence occupies residues 1–24; that stretch reads MKAQSKRTSRLLILLGIAVAIIVA. A compositionally biased stretch (polar residues) spans 36 to 46; the sequence is DGSTGAQQHAV. Disordered stretches follow at residues 36-57 and 398-443; these read DGST…GGRR and TPRS…AEKS. Residues 409–419 show a composition bias toward basic and acidic residues; it reads AAEKPATAEKA. Over residues 427-443 the composition is skewed to low complexity; it reads SATGASAGSTTTAAEKS.

The protein belongs to the membrane fusion protein (MFP) (TC 8.A.1) family. As to quaternary structure, part of a tripartite efflux system composed of MdtA, MdtB and MdtC.

The protein resides in the cell inner membrane. This Yersinia enterocolitica serotype O:8 / biotype 1B (strain NCTC 13174 / 8081) protein is Multidrug resistance protein MdtA.